Reading from the N-terminus, the 142-residue chain is Putative pre-16S rRNA nuclease (142 aa).

The protein belongs to the YqgF nuclease family.

The protein localises to the cytoplasm. Could be a nuclease involved in processing of the 5'-end of pre-16S rRNA. The protein is Putative pre-16S rRNA nuclease of Malacoplasma penetrans (strain HF-2) (Mycoplasma penetrans).